The chain runs to 405 residues: Serine/threonine transporter SstT (405 aa).

The next 8 helical transmembrane spans lie at 13 to 33 (GGSLVLQIFVGIIAGVALAGF), 43 to 63 (FLGDLFVGALKAIAPVLVFVL), 82 to 102 (IILLYLVGTFAAALTAVLMSF), 141 to 161 (ALINANYIGLLAWGVGLGIAL), 185 to 205 (FVICLAPIGIFGLVAATIAQT), 217 to 237 (LGVLLGAMAVIAFVVNPLIVF), 298 to 318 (MAGAAITITVLTLAAVHTLGI), and 339 to 359 (ASGVAGGSLLLIPLACSLFGI).

This sequence belongs to the dicarboxylate/amino acid:cation symporter (DAACS) (TC 2.A.23) family.

It is found in the cell inner membrane. The catalysed reaction is L-serine(in) + Na(+)(in) = L-serine(out) + Na(+)(out). The enzyme catalyses L-threonine(in) + Na(+)(in) = L-threonine(out) + Na(+)(out). In terms of biological role, involved in the import of serine and threonine into the cell, with the concomitant import of sodium (symport system). The protein is Serine/threonine transporter SstT of Shewanella amazonensis (strain ATCC BAA-1098 / SB2B).